A 240-amino-acid chain; its full sequence is Serine protease SplB (240 aa).

The signal sequence occupies residues Met-1–Ala-36. Catalysis depends on charge relay system residues His-75, Asp-113, and Ser-193.

It belongs to the peptidase S1B family.

The protein localises to the secreted. Serine protease that cleaves specifically after the sequence Trp-Glu-Leu-Gln. The polypeptide is Serine protease SplB (splB) (Staphylococcus aureus (strain Mu3 / ATCC 700698)).